Consider the following 569-residue polypeptide: Urease subunit alpha (569 aa).

Residues Gly131–Phe569 enclose the Urease domain. His136, His138, and Lys219 together coordinate Ni(2+). Lys219 bears the N6-carboxylysine mark. His221 is a substrate binding site. Ni(2+) contacts are provided by His248 and His274. The active-site Proton donor is the His322. Asp362 lines the Ni(2+) pocket.

It belongs to the metallo-dependent hydrolases superfamily. Urease alpha subunit family. Heterotrimer of UreA (gamma), UreB (beta) and UreC (alpha) subunits. Three heterotrimers associate to form the active enzyme. It depends on Ni cation as a cofactor. In terms of processing, carboxylation allows a single lysine to coordinate two nickel ions.

The protein localises to the cytoplasm. It carries out the reaction urea + 2 H2O + H(+) = hydrogencarbonate + 2 NH4(+). The protein operates within nitrogen metabolism; urea degradation; CO(2) and NH(3) from urea (urease route): step 1/1. The protein is Urease subunit alpha of Herpetosiphon aurantiacus (strain ATCC 23779 / DSM 785 / 114-95).